A 332-amino-acid polypeptide reads, in one-letter code: Biotin synthase (332 aa).

The Radical SAM core domain maps to 46–275 (YYGKKVKLNM…SKEIRISGGR (230 aa)). [4Fe-4S] cluster contacts are provided by Cys64, Cys68, and Cys71. Residues Cys108, Cys140, Cys200, and Arg270 each coordinate [2Fe-2S] cluster.

It belongs to the radical SAM superfamily. Biotin synthase family. As to quaternary structure, homodimer. Requires [4Fe-4S] cluster as cofactor. The cofactor is [2Fe-2S] cluster.

The catalysed reaction is (4R,5S)-dethiobiotin + (sulfur carrier)-SH + 2 reduced [2Fe-2S]-[ferredoxin] + 2 S-adenosyl-L-methionine = (sulfur carrier)-H + biotin + 2 5'-deoxyadenosine + 2 L-methionine + 2 oxidized [2Fe-2S]-[ferredoxin]. Its pathway is cofactor biosynthesis; biotin biosynthesis; biotin from 7,8-diaminononanoate: step 2/2. Catalyzes the conversion of dethiobiotin (DTB) to biotin by the insertion of a sulfur atom into dethiobiotin via a radical-based mechanism. This is Biotin synthase from Lysinibacillus sphaericus (Bacillus sphaericus).